We begin with the raw amino-acid sequence, 204 residues long: High frequency lysogenization protein HflD homolog (204 aa).

Belongs to the HflD family.

It is found in the cytoplasm. The protein localises to the cell inner membrane. In Xanthomonas campestris pv. campestris (strain ATCC 33913 / DSM 3586 / NCPPB 528 / LMG 568 / P 25), this protein is High frequency lysogenization protein HflD homolog.